The sequence spans 543 residues: Chaperonin GroEL (543 aa).

ATP contacts are provided by residues 30-33 (TLGP), Lys-51, 87-91 (DGTTT), Gly-415, 479-481 (NAA), and Asp-495.

This sequence belongs to the chaperonin (HSP60) family. In terms of assembly, forms a cylinder of 14 subunits composed of two heptameric rings stacked back-to-back. Interacts with the co-chaperonin GroES.

The protein localises to the cytoplasm. It catalyses the reaction ATP + H2O + a folded polypeptide = ADP + phosphate + an unfolded polypeptide.. Together with its co-chaperonin GroES, plays an essential role in assisting protein folding. The GroEL-GroES system forms a nano-cage that allows encapsulation of the non-native substrate proteins and provides a physical environment optimized to promote and accelerate protein folding. The chain is Chaperonin GroEL from Francisella philomiragia subsp. philomiragia (strain ATCC 25017 / CCUG 19701 / FSC 153 / O#319-036).